Consider the following 749-residue polypeptide: Putative Xaa-Pro aminopeptidase FRA1 (749 aa).

The interval 1–33 (MTSKPSTSDGRAHSISHVPGTHMRGTSASHSPR) is disordered. A phosphoserine mark is found at Ser69, Ser92, and Ser95. Mn(2+)-binding residues include Asp551, Asp562, Glu660, and Glu674.

Belongs to the peptidase M24B family. As to quaternary structure, homodimer. Interacts with FRA2. The cofactor is Mn(2+).

The protein localises to the cytoplasm. The enzyme catalyses Release of any N-terminal amino acid, including proline, that is linked to proline, even from a dipeptide or tripeptide.. In terms of biological role, involved in the regulation of the iron regulon in responss to decreased mitochondrial iron-sulfur cluster synthesis. The polypeptide is Putative Xaa-Pro aminopeptidase FRA1 (FRA1) (Saccharomyces cerevisiae (strain ATCC 204508 / S288c) (Baker's yeast)).